The chain runs to 307 residues: 4-diphosphocytidyl-2-C-methyl-D-erythritol kinase (307 aa).

Lys-9 is an active-site residue. 94-104 contacts ATP; it reads PIGAGLAGGSS. The active site involves Asp-136.

Belongs to the GHMP kinase family. IspE subfamily.

It catalyses the reaction 4-CDP-2-C-methyl-D-erythritol + ATP = 4-CDP-2-C-methyl-D-erythritol 2-phosphate + ADP + H(+). The protein operates within isoprenoid biosynthesis; isopentenyl diphosphate biosynthesis via DXP pathway; isopentenyl diphosphate from 1-deoxy-D-xylulose 5-phosphate: step 3/6. Its function is as follows. Catalyzes the phosphorylation of the position 2 hydroxy group of 4-diphosphocytidyl-2C-methyl-D-erythritol. The polypeptide is 4-diphosphocytidyl-2-C-methyl-D-erythritol kinase (Synechococcus sp. (strain CC9605)).